The sequence spans 1195 residues: Chromosome partition protein Smc (1195 aa).

33–40 (PNGSGKSN) serves as a coordination point for ATP. Coiled-coil stretches lie at residues 185-241 (GVAQ…RQEQ), 273-348 (DAAT…IQAL), and 380-528 (QYQQ…QETQ). The SMC hinge domain maps to 542 to 658 (PGVHGLVAQL…FERLDQARRY (117 aa)). The stretch at 698–1043 (GESAEVRAIR…ELLLRIENFT (346 aa)) forms a coiled coil.

This sequence belongs to the SMC family. In terms of assembly, homodimer.

The protein resides in the cytoplasm. In terms of biological role, required for chromosome condensation and partitioning. The chain is Chromosome partition protein Smc from Synechococcus sp. (strain ATCC 27144 / PCC 6301 / SAUG 1402/1) (Anacystis nidulans).